We begin with the raw amino-acid sequence, 244 residues long: Probable transcriptional regulatory protein XF_1906 (244 aa).

Belongs to the TACO1 family.

It is found in the cytoplasm. The sequence is that of Probable transcriptional regulatory protein XF_1906 from Xylella fastidiosa (strain 9a5c).